The following is a 231-amino-acid chain: Lipoprotein-releasing system ATP-binding protein LolD (231 aa).

Positions 6–231 (LKCQSVHKVY…VLAKVAPNSL (226 aa)) constitute an ABC transporter domain. 42 to 49 (GASGSGKS) lines the ATP pocket.

This sequence belongs to the ABC transporter superfamily. Lipoprotein translocase (TC 3.A.1.125) family. In terms of assembly, the complex is composed of two ATP-binding proteins (LolD) and two transmembrane proteins (LolC and LolE).

The protein resides in the cell inner membrane. Part of the ABC transporter complex LolCDE involved in the translocation of mature outer membrane-directed lipoproteins, from the inner membrane to the periplasmic chaperone, LolA. Responsible for the formation of the LolA-lipoprotein complex in an ATP-dependent manner. This chain is Lipoprotein-releasing system ATP-binding protein LolD, found in Hahella chejuensis (strain KCTC 2396).